Consider the following 240-residue polypeptide: Octanoyltransferase (240 aa).

The BPL/LPL catalytic domain maps to Gly-49–Arg-233. Substrate contacts are provided by residues Arg-87 to His-94, Ala-162 to Gly-164, and Gly-175 to Ala-177. The active-site Acyl-thioester intermediate is Cys-193.

This sequence belongs to the LipB family.

Its subcellular location is the cytoplasm. The catalysed reaction is octanoyl-[ACP] + L-lysyl-[protein] = N(6)-octanoyl-L-lysyl-[protein] + holo-[ACP] + H(+). The protein operates within protein modification; protein lipoylation via endogenous pathway; protein N(6)-(lipoyl)lysine from octanoyl-[acyl-carrier-protein]: step 1/2. Its function is as follows. Catalyzes the transfer of endogenously produced octanoic acid from octanoyl-acyl-carrier-protein onto the lipoyl domains of lipoate-dependent enzymes. Lipoyl-ACP can also act as a substrate although octanoyl-ACP is likely to be the physiological substrate. The polypeptide is Octanoyltransferase (Bradyrhizobium sp. (strain BTAi1 / ATCC BAA-1182)).